A 116-amino-acid polypeptide reads, in one-letter code: Large ribosomal subunit protein bL20 (116 aa).

Belongs to the bacterial ribosomal protein bL20 family.

Its function is as follows. Binds directly to 23S ribosomal RNA and is necessary for the in vitro assembly process of the 50S ribosomal subunit. It is not involved in the protein synthesizing functions of that subunit. This is Large ribosomal subunit protein bL20 from Bacteroides thetaiotaomicron (strain ATCC 29148 / DSM 2079 / JCM 5827 / CCUG 10774 / NCTC 10582 / VPI-5482 / E50).